We begin with the raw amino-acid sequence, 1004 residues long: E3 ubiquitin-protein ligase NEDD4-like (1004 aa).

The region spanning 30 to 154 is the C2 domain; it reads LASHHSRGLE…TEDPTMERPY (125 aa). Disordered stretches follow at residues 207-230 and 272-407; these read SNDSASQHQEELPPPPLPPGWEEK and AAHR…TPSV. A WW 1 domain is found at 221-254; sequence PPLPPGWEEKVDNLGRTYYVNHNNRSTQWHRPSL. Residue S341 is modified to Phosphoserine. The residue at position 347 (T347) is a Phosphothreonine. 2 stretches are compositionally biased toward polar residues: residues 347–359 and 366–376; these read TPDSNGEQFSSLI and RLRSCSVTDTV. S371 carries the phosphoserine; by WNK1 and WNK4 modification. Phosphothreonine; by SGK1 is present on T396. The WW 2 domain occupies 414–447; that stretch reads PGLPSGWEERKDAKGRTYYVNHNNRTTTWTRPIM. Residues 453-523 form a disordered region; that stretch reads GASGSATNSN…YNSPKPQHKV (71 aa). S475 bears the Phosphoserine mark. S477 carries the post-translational modification Phosphoserine; by SGK1. Phosphoserine occurs at positions 478, 493, 504, 508, 512, and 516. The span at 489 to 500 shows a compositional bias: basic and acidic residues; sequence GAKDSPIRRAVK. WW domains follow at residues 526–559 and 577–610; these read SFLPPGWEMRIAPNGRPFFIDHNTKTTTWEDPRL and GPLPPGWEERIHLDGRTFYIDHNSKITQWEDPRL. The 335-residue stretch at 669–1003 folds into the HECT domain; the sequence is RPDVLKARLW…VENAQGFEGV (335 aa). The active-site Glycyl thioester intermediate is C971.

Interacts with UBE2E3. Interacts with NDFIP1; this interaction activates the E3 ubiquitin-protein ligase. Interacts with NDFIP2; this interaction activates the E3 ubiquitin-protein ligase. Interacts (via WW domains) with SCN1A. Interacts (via WW domains) with SCN2A. Interacts (via WW domains) with SCN3A. Interacts (via WW domains) with SCN5A. Interacts (via WW domains) with SCN8A. Interacts (via WW domains) with SCN9A. Interacts (via WW domains) with SCN10A. Interacts (via WW domains) with CLCN5. Interacts with SMAD2. Interacts with SMAD3. Interacts with SMAD6. Interacts with SMAD7. The phosphorylated form interacts with 14-3-3 proteins. Interacts with TNK2. Interacts with WNK1. Interacts with SGK1. Interacts (via C2 domain) with NPC2. Interacts with ARRDC4. Interacts with KCNQ1; promotes internalization of KCNQ1. Interacts (via domains WW1, 3 and 4) with USP36; the interaction inhibits ubiquitination of, at least, NTRK1, KCNQ2 and KCNQ3 by NEDD4L. Interacts with PRRG4 (via cytoplasmic domain). Interacts with LDLRAD3; the interaction is direct. Interacts with UBE2D2. Interacts with TTYH2 and TTYH3. Phosphorylated; which impairs interaction with SCNN. Interaction with YWHAH inhibits dephosphorylation. Aldosterone induces Ser-477 phosphorylation by SGK1. In terms of processing, auto-ubiquitinated. Deubiquitinated by USP36, no effect on NEDD4L protein levels. Both proteins interact and regulate each other's ubiquitination levels. As to expression, highly expressed in liver and kidney. Also expressed in heart, brain and lung. Isoform 1 is expressed in kidney, lung and gut. Isoform 3 is ubiquitously expressed.

The protein localises to the cytoplasm. It localises to the golgi apparatus. The protein resides in the endosome. Its subcellular location is the multivesicular body. The enzyme catalyses S-ubiquitinyl-[E2 ubiquitin-conjugating enzyme]-L-cysteine + [acceptor protein]-L-lysine = [E2 ubiquitin-conjugating enzyme]-L-cysteine + N(6)-ubiquitinyl-[acceptor protein]-L-lysine.. It catalyses the reaction [E2 ubiquitin-conjugating enzyme]-S-ubiquitinyl-L-cysteine + [acceptor protein]-L-cysteine = [E2 ubiquitin-conjugating enzyme]-L-cysteine + [acceptor protein]-S-ubiquitinyl-L-cysteine.. Its pathway is protein modification; protein ubiquitination. With respect to regulation, activated by NDFIP1- and NDFIP2-binding. In terms of biological role, E3 ubiquitin-protein ligase that mediates the polyubiquitination of lysine and cysteine residues on target proteins and is thereby implicated in the regulation of various signaling pathways including autophagy, innate immunity or DNA repair. Inhibits TGF-beta signaling by triggering SMAD2 and TGFBR1 ubiquitination and proteasome-dependent degradation. Downregulates autophagy and cell growth by ubiquitinating and reducing cellular ULK1 or ASCT2 levels. Promotes ubiquitination and internalization of various plasma membrane channels such as ENaC, SCN2A/Nav1.2, SCN3A/Nav1.3, SCN5A/Nav1.5, SCN9A/Nav1.7, SCN10A/Nav1.8, KCNA3/Kv1.3, KCNH2, EAAT1, KCNQ2/Kv7.2, KCNQ3/Kv7.3 or CLC5. Promotes ubiquitination and degradation of SGK1 and TNK2. Ubiquitinates BRAT1 and this ubiquitination is enhanced in the presence of NDFIP1. Plays a role in dendrite formation by melanocytes. Involved in the regulation of TOR signaling. Ubiquitinates and regulates protein levels of NTRK1 once this one is activated by NGF. Plays a role in antiviral innate immunity by catalyzing 'Lys-29'-linked cysteine ubiquitination of TRAF3, resulting in enhanced 'Lys-48' and 'Lys-63'-linked ubiquitination of TRAF3. Ubiquitinates TTYH2 and TYYH3 and regulates protein levels of TTYH2. This chain is E3 ubiquitin-protein ligase NEDD4-like (Nedd4l), found in Mus musculus (Mouse).